We begin with the raw amino-acid sequence, 336 residues long: HTH-type transcriptional regulator CdhR (336 aa).

The region spanning 213–311 is the HTH araC/xylS-type domain; that stretch reads VQVIGEMERH…AASPSQDRAV (99 aa). DNA-binding regions (H-T-H motif) lie at residues 230-251 and 278-301; these read LELA…RVHL and VLQV…RARF. The segment at 305-336 is disordered; that stretch reads PSQDRAVLPLKAPAATPPGAPAGHRTPRAERG.

Induces the transcription of the PA5384-PA5388 operon in response to carnitine. This operon is involved in the degradation of L-carnitine, and allows P.aeruginosa to grow on L-carnitine as the sole source of carbon and nitrogen. In Pseudomonas aeruginosa (strain ATCC 15692 / DSM 22644 / CIP 104116 / JCM 14847 / LMG 12228 / 1C / PRS 101 / PAO1), this protein is HTH-type transcriptional regulator CdhR (cdhR).